Consider the following 95-residue polypeptide: uncharacterized protein (95 aa).

This is an uncharacterized protein from Caenorhabditis elegans.